A 245-amino-acid chain; its full sequence is Methyltransferase-like protein 27 (245 aa).

This is Methyltransferase-like protein 27 from Homo sapiens (Human).